We begin with the raw amino-acid sequence, 734 residues long: Photosystem I P700 chlorophyll a apoprotein A2 (734 aa).

The next 8 helical transmembrane spans lie at 46 to 69 (IFASHFGQLAIIFLWTSGNLFHVA), 135 to 158 (LYTGALFLLFLSTLSLVAGWLHLQ), 175 to 199 (LNHHLSGLFGVSSLAWTGHLVHVAI), 273 to 291 (IAHHHLAIAFIFLIAGHMY), 330 to 353 (IHFQLGLALASLGVITSLVAQHMY), 369 to 395 (AALYTHHQYIAGFIMTGAFAHGAIFFI), 417 to 439 (AIISHLSWASLFLGFHTLGLYVH), and 517 to 535 (FLVHHAIALGLHTTTLILV). Positions 559 and 568 each coordinate [4Fe-4S] cluster. 2 helical membrane-spanning segments follow: residues 575–596 (AFYLAVFWMLNTIGWVTFYWHW) and 643–665 (LSVWAWMFLFGHLVWATGFMFLI). Residues histidine 654, methionine 662, and tyrosine 670 each coordinate chlorophyll a. Tryptophan 671 serves as a coordination point for phylloquinone. The helical transmembrane segment at 707–727 (LVGLAHFSVGYIFTYAAFLIA) threads the bilayer.

The protein belongs to the PsaA/PsaB family. As to quaternary structure, the PsaA/B heterodimer binds the P700 chlorophyll special pair and subsequent electron acceptors. PSI consists of a core antenna complex that captures photons, and an electron transfer chain that converts photonic excitation into a charge separation. The eukaryotic PSI reaction center is composed of at least 11 subunits. P700 is a chlorophyll a/chlorophyll a' dimer, A0 is one or more chlorophyll a, A1 is one or both phylloquinones and FX is a shared 4Fe-4S iron-sulfur center. serves as cofactor.

It is found in the plastid. Its subcellular location is the chloroplast thylakoid membrane. It carries out the reaction reduced [plastocyanin] + hnu + oxidized [2Fe-2S]-[ferredoxin] = oxidized [plastocyanin] + reduced [2Fe-2S]-[ferredoxin]. Functionally, psaA and PsaB bind P700, the primary electron donor of photosystem I (PSI), as well as the electron acceptors A0, A1 and FX. PSI is a plastocyanin-ferredoxin oxidoreductase, converting photonic excitation into a charge separation, which transfers an electron from the donor P700 chlorophyll pair to the spectroscopically characterized acceptors A0, A1, FX, FA and FB in turn. Oxidized P700 is reduced on the lumenal side of the thylakoid membrane by plastocyanin. This Agrostis stolonifera (Creeping bentgrass) protein is Photosystem I P700 chlorophyll a apoprotein A2.